A 612-amino-acid chain; its full sequence is Oligopeptide transport ATP-binding protein OppD (612 aa).

The ABC transporter 1 domain maps to 5–255 (LEVTDLAVTF…RRMPYTVGLL (251 aa)). The ATP site is built by Ser43, Gly44, Ser45, Gly46, Lys47, Ser48, Ala49, Tyr61, Gln96, Arg147, Gly158, Glu159, and His213. [4Fe-4S] cluster-binding residues include Cys286, Cys292, Cys299, and Cys317. One can recognise an ABC transporter 2 domain in the interval 350–600 (VRVRHLVKTY…PKHEYTRRLL (251 aa)). The ATP site is built by Ser396, Gly397, Ser398, Gly399, Lys400, Ser401, Thr402, Gln445, Arg495, Glu499, Gly503, and His558.

This sequence belongs to the ABC transporter superfamily. In terms of assembly, the complex is composed of an ATP-binding protein (OppD), two transmembrane proteins (OppB and OppC) and a solute-binding protein (OppA).

The protein localises to the cell inner membrane. The catalysed reaction is a [peptide](out) + ATP + H2O = a [peptide](in) + ADP + phosphate + H(+). In terms of biological role, part of the ABC transporter complex OppABCD involved in the uptake of oligopeptides. Responsible for energy coupling to the transport system. This is Oligopeptide transport ATP-binding protein OppD from Mycobacterium bovis (strain ATCC BAA-935 / AF2122/97).